The sequence spans 410 residues: Arginine deiminase (410 aa).

Residue Cys398 is the Amidino-cysteine intermediate of the active site.

Belongs to the arginine deiminase family.

The protein resides in the cytoplasm. The enzyme catalyses L-arginine + H2O = L-citrulline + NH4(+). The protein operates within amino-acid degradation; L-arginine degradation via ADI pathway; carbamoyl phosphate from L-arginine: step 1/2. This chain is Arginine deiminase, found in Limosilactobacillus reuteri (strain DSM 20016) (Lactobacillus reuteri).